We begin with the raw amino-acid sequence, 273 residues long: DnaJ homolog subfamily C member 27 (273 aa).

The interval Met1–Lys18 is required for interaction with MAPK1. GTP is bound by residues Gly23–Ser30, Asp71–His75, and Asn134–Asp137. The region spanning Asp217–Lys273 is the J domain.

This sequence belongs to the small GTPase superfamily. Rab family. In terms of assembly, interacts directly with MAPK1 (wild-type and kinase-deficient forms). Interacts directly (in GTP-bound form) with MAP2K1 (wild-type and kinase-deficient forms).

Its subcellular location is the nucleus. Its function is as follows. GTPase which can activate the MEK/ERK pathway and induce cell transformation when overexpressed. May act as a nuclear scaffold for MAPK1, probably by association with MAPK1 nuclear export signal leading to enhanced ERK1/ERK2 signaling. This is DnaJ homolog subfamily C member 27 (Dnajc27) from Rattus norvegicus (Rat).